A 660-amino-acid chain; its full sequence is DNA ligase (660 aa).

Residues 33 to 37 (DFVYD), 82 to 83 (SL), and E110 contribute to the NAD(+) site. Catalysis depends on K112, which acts as the N6-AMP-lysine intermediate. R133, E167, K281, and K305 together coordinate NAD(+). Zn(2+) is bound by residues C396, C399, C412, and C417. Residues 583 to 660 (GENKLLAGKK…SFEDIKSYLD (78 aa)) form the BRCT domain.

This sequence belongs to the NAD-dependent DNA ligase family. LigA subfamily. Mg(2+) serves as cofactor. It depends on Mn(2+) as a cofactor.

It carries out the reaction NAD(+) + (deoxyribonucleotide)n-3'-hydroxyl + 5'-phospho-(deoxyribonucleotide)m = (deoxyribonucleotide)n+m + AMP + beta-nicotinamide D-nucleotide.. Functionally, DNA ligase that catalyzes the formation of phosphodiester linkages between 5'-phosphoryl and 3'-hydroxyl groups in double-stranded DNA using NAD as a coenzyme and as the energy source for the reaction. It is essential for DNA replication and repair of damaged DNA. The polypeptide is DNA ligase (Borreliella burgdorferi (strain ZS7) (Borrelia burgdorferi)).